A 349-amino-acid chain; its full sequence is Aspartate carbamoyltransferase catalytic subunit (349 aa).

Carbamoyl phosphate-binding residues include R59 and T60. K87 is a binding site for L-aspartate. Carbamoyl phosphate is bound by residues R109, H142, and Q145. L-aspartate-binding residues include R182 and R253. Positions 294 and 295 each coordinate carbamoyl phosphate.

It belongs to the aspartate/ornithine carbamoyltransferase superfamily. ATCase family. As to quaternary structure, heterododecamer (2C3:3R2) of six catalytic PyrB chains organized as two trimers (C3), and six regulatory PyrI chains organized as three dimers (R2).

The enzyme catalyses carbamoyl phosphate + L-aspartate = N-carbamoyl-L-aspartate + phosphate + H(+). It participates in pyrimidine metabolism; UMP biosynthesis via de novo pathway; (S)-dihydroorotate from bicarbonate: step 2/3. In terms of biological role, catalyzes the condensation of carbamoyl phosphate and aspartate to form carbamoyl aspartate and inorganic phosphate, the committed step in the de novo pyrimidine nucleotide biosynthesis pathway. This chain is Aspartate carbamoyltransferase catalytic subunit, found in Synechococcus sp. (strain CC9902).